Here is a 338-residue protein sequence, read N- to C-terminus: Selenocysteine methyltransferase (338 aa).

Positions 1 to 327 (MSSPLITDFL…DTIRGIYKIL (327 aa)) constitute a Hcy-binding domain. Zn(2+) is bound by residues Cys245, Cys312, and Cys313.

Monomer. It depends on Zn(2+) as a cofactor. Present in all tissues tested.

It catalyses the reaction S-methyl-L-methionine + L-selenocysteine = Se-methyl-L-selenocysteine + L-methionine + H(+). Its function is as follows. Catalyzes the methylation of selenocysteine with S-methylmethionine as donor. Does not methylate cysteine. In Astragalus bisulcatus (Two-grooved milkvetch), this protein is Selenocysteine methyltransferase (SMTA).